A 71-amino-acid chain; its full sequence is Small ribosomal subunit protein bS21 (71 aa).

It belongs to the bacterial ribosomal protein bS21 family.

In Ruthia magnifica subsp. Calyptogena magnifica, this protein is Small ribosomal subunit protein bS21.